The primary structure comprises 56 residues: Endoglucanase Cel5A (56 aa).

The active-site Nucleophile is the Glu-45.

The protein belongs to the glycosyl hydrolase 5 (cellulase A) family.

The protein localises to the secreted. The protein resides in the extracellular space. It carries out the reaction Endohydrolysis of (1-&gt;4)-beta-D-glucosidic linkages in cellulose, lichenin and cereal beta-D-glucans.. Functionally, has avicelase and carboxymethylcellulase activity. The polypeptide is Endoglucanase Cel5A (Gloeophyllum trabeum (Brown rot fungus)).